A 348-amino-acid chain; its full sequence is Lipoyl synthase (348 aa).

The interval 1–45 is disordered; the sequence is MSESAKPRITSGSKFRNEHGFSAIKDGVKRSSSNTEGKSLERKPK. Residues cysteine 73, cysteine 78, cysteine 84, cysteine 99, cysteine 103, cysteine 106, and serine 314 each coordinate [4Fe-4S] cluster. A Radical SAM core domain is found at 85–303; it reads WTNGTATIMV…RDIGLEKGFM (219 aa).

It belongs to the radical SAM superfamily. Lipoyl synthase family. It depends on [4Fe-4S] cluster as a cofactor.

Its subcellular location is the cytoplasm. It catalyses the reaction [[Fe-S] cluster scaffold protein carrying a second [4Fe-4S](2+) cluster] + N(6)-octanoyl-L-lysyl-[protein] + 2 oxidized [2Fe-2S]-[ferredoxin] + 2 S-adenosyl-L-methionine + 4 H(+) = [[Fe-S] cluster scaffold protein] + N(6)-[(R)-dihydrolipoyl]-L-lysyl-[protein] + 4 Fe(3+) + 2 hydrogen sulfide + 2 5'-deoxyadenosine + 2 L-methionine + 2 reduced [2Fe-2S]-[ferredoxin]. It participates in protein modification; protein lipoylation via endogenous pathway; protein N(6)-(lipoyl)lysine from octanoyl-[acyl-carrier-protein]: step 2/2. Catalyzes the radical-mediated insertion of two sulfur atoms into the C-6 and C-8 positions of the octanoyl moiety bound to the lipoyl domains of lipoate-dependent enzymes, thereby converting the octanoylated domains into lipoylated derivatives. This is Lipoyl synthase from Marinobacter nauticus (strain ATCC 700491 / DSM 11845 / VT8) (Marinobacter aquaeolei).